Reading from the N-terminus, the 447-residue chain is Phosphatidylinositol N-acetylglucosaminyltransferase subunit A (447 aa).

Residues 1-387 (MAEPPKLRVL…NRSLLERLMR (387 aa)) lie on the Cytoplasmic side of the membrane. A helical membrane pass occupies residues 388–408 (FLSCGAWAGKLFCMVMILDYL). At 409–447 (LWRLLQLLQPDEDIEEAPDICLCHHRGVEVSEGLRKKIK) the chain is on the lumenal side.

This sequence belongs to the glycosyltransferase group 1 family. Glycosyltransferase 4 subfamily. As to expression, expressed in roots, stems, leaves, flowers and pollen grains.

The protein localises to the endoplasmic reticulum membrane. It carries out the reaction a 1,2-diacyl-sn-glycero-3-phospho-(1D-myo-inositol) + UDP-N-acetyl-alpha-D-glucosamine = a 6-(N-acetyl-alpha-D-glucosaminyl)-1-(1,2-diacyl-sn-glycero-3-phospho)-1D-myo-inositol + UDP + H(+). The protein operates within glycolipid biosynthesis; glycosylphosphatidylinositol-anchor biosynthesis. Necessary for the synthesis of N-acetylglucosaminyl-phosphatidylinositol, the very early intermediate in GPI-anchor biosynthesis. Required for pollen germination and pollen tube growth. The polypeptide is Phosphatidylinositol N-acetylglucosaminyltransferase subunit A (Arabidopsis thaliana (Mouse-ear cress)).